The primary structure comprises 176 residues: Warthog protein 5 (176 aa).

A signal peptide spans 1 to 21; that stretch reads MCSMWLMASWLMAFVAGSTLA. The N-linked (GlcNAc...) asparagine glycan is linked to Asn70.

In terms of tissue distribution, expressed in seam cells, excretory cell, reproductive system, pharynx, pharyngeal-intestinal valve cells, neurons and neuronal support cells.

The protein resides in the secreted. Its function is as follows. Intercellular signal essential for a variety of patterning events during development. The protein is Warthog protein 5 (wrt-5) of Caenorhabditis elegans.